The sequence spans 1773 residues: Plexin-2 (1773 aa).

Residues 1-19 form the signal peptide; sequence MLFIESAFLVLTSLSAAEA. A Sema domain is found at 20 to 436; sequence ATPFEGGVKQ…MPYGIVMEEL (417 aa). Topologically, residues 20-1130 are extracellular; the sequence is ATPFEGGVKQ…SDHALPSRLS (1111 aa). N-linked (GlcNAc...) asparagine glycosylation occurs at asparagine 65. 9 cysteine pairs are disulfide-bonded: cysteine 83/cysteine 90, cysteine 117/cysteine 125, cysteine 239/cysteine 341, cysteine 255/cysteine 292, cysteine 310/cysteine 328, cysteine 439/cysteine 456, cysteine 445/cysteine 479, cysteine 448/cysteine 465, and cysteine 459/cysteine 471. N-linked (GlcNAc...) asparagine glycosylation is present at asparagine 241. In terms of domain architecture, PSI 1 spans 438 to 480; it reads TCAHHESCTDCQVSVDPLCQWCHPTQSCTTSSRCSGPLTTQCP. Residue asparagine 494 is glycosylated (N-linked (GlcNAc...) asparagine). Cysteine 516 and cysteine 538 are disulfide-bonded. A glycan (N-linked (GlcNAc...) asparagine) is linked at asparagine 566. The 38-residue stretch at 571-608 folds into the PSI 2 domain; that stretch reads DCAGYSTCSTCMSSEFGCQWCSHKCSSSCGSASAKACV. N-linked (GlcNAc...) asparagine glycosylation is found at asparagine 670 and asparagine 693. Residues 698 to 739 enclose the PSI 3 domain; sequence SCSNLAADCSSCLALSPSLSCGWCNRKCSHECHESKATAVCD. 3 consecutive IPT/TIG domains span residues 741–829, 831–916, and 919–1006; these read PKID…FSFV, VSIF…FEYR, and PSVN…FLMD. 4 N-linked (GlcNAc...) asparagine glycosylation sites follow: asparagine 855, asparagine 877, asparagine 975, and asparagine 1007. The chain crosses the membrane as a helical span at residues 1131–1151; that stretch reads FLILGLLLFTVITLIVMCLIF. Residues 1150-1188 are a coiled coil; sequence IFKRRRQEREKEYRKIQLQMENLENNVRKECKQAFAELQ. Over 1152–1764 the chain is Cytoplasmic; that stretch reads KRRRQEREKE…LHVCLETDNH (613 aa).

The protein belongs to the plexin family. Interacts with mab-20.

The protein resides in the cell membrane. Functionally, involved as a receptor for mab-20/sema-2a in the formation or stabilization of cell-cell contacts at several stages of epithelial morphogenesis. In early embryonic development, required for proper ventral closure of the epidermis. During male tail morphogenesis, involved in precursor cell sorting and in the formation of distinct sensory rays. Involved in axon guidance of SDQL neurons during neurogenesis. The polypeptide is Plexin-2 (plx-2) (Caenorhabditis briggsae).